The primary structure comprises 448 residues: 3-phosphoshikimate 1-carboxyvinyltransferase (448 aa).

3-phosphoshikimate is bound by residues Lys38, Ser39, and Arg43. A phosphoenolpyruvate-binding site is contributed by Lys38. Gly111 and Arg140 together coordinate phosphoenolpyruvate. The 3-phosphoshikimate site is built by Ser185, Gln187, Asp335, and Lys362. Position 187 (Gln187) interacts with phosphoenolpyruvate. Asp335 (proton acceptor) is an active-site residue. Residues Arg366 and Arg408 each contribute to the phosphoenolpyruvate site.

The protein belongs to the EPSP synthase family. In terms of assembly, monomer.

The protein localises to the cytoplasm. It carries out the reaction 3-phosphoshikimate + phosphoenolpyruvate = 5-O-(1-carboxyvinyl)-3-phosphoshikimate + phosphate. The protein operates within metabolic intermediate biosynthesis; chorismate biosynthesis; chorismate from D-erythrose 4-phosphate and phosphoenolpyruvate: step 6/7. Catalyzes the transfer of the enolpyruvyl moiety of phosphoenolpyruvate (PEP) to the 5-hydroxyl of shikimate-3-phosphate (S3P) to produce enolpyruvyl shikimate-3-phosphate and inorganic phosphate. The polypeptide is 3-phosphoshikimate 1-carboxyvinyltransferase (Gloeothece citriformis (strain PCC 7424) (Cyanothece sp. (strain PCC 7424))).